A 247-amino-acid chain; its full sequence is tRNA (guanine-N(1)-)-methyltransferase (247 aa).

Residues Gly-112 and 131–136 (LGDFVL) each bind S-adenosyl-L-methionine.

The protein belongs to the RNA methyltransferase TrmD family. In terms of assembly, homodimer.

The protein resides in the cytoplasm. The catalysed reaction is guanosine(37) in tRNA + S-adenosyl-L-methionine = N(1)-methylguanosine(37) in tRNA + S-adenosyl-L-homocysteine + H(+). In terms of biological role, specifically methylates guanosine-37 in various tRNAs. This is tRNA (guanine-N(1)-)-methyltransferase from Syntrophotalea carbinolica (strain DSM 2380 / NBRC 103641 / GraBd1) (Pelobacter carbinolicus).